We begin with the raw amino-acid sequence, 190 residues long: MNWHMIISGLIVVVIKVVGMTFFLLYFPQVFGKSNDGFVPTESYGTTSVQNVSQIFGRNDESTMPTRSYGTVCPRNWDFHQGKCFFFSFSESPWKDSMDYCATQGSTLAIVNTPEKLKYLQDIAGIENYFIGLVRQPGEKKWRWINNSVFNGNVTNQDQNFDCVTIGLTKTYDAASCEVSYRWICEMNAK.

Residues 1–4 (MNWH) are Cytoplasmic-facing. A helical; Signal-anchor for type II membrane protein transmembrane segment spans residues 5-25 (MIISGLIVVVIKVVGMTFFLL). The Extracellular portion of the chain corresponds to 26–190 (YFPQVFGKSN…YRWICEMNAK (165 aa)). 3 N-linked (GlcNAc...) asparagine glycosylation sites follow: N51, N146, and N153. Residues 80-186 (HQGKCFFFSF…CEVSYRWICE (107 aa)) form the C-type lectin domain. Cystine bridges form between C101-C185 and C163-C177.

In terms of assembly, monomer. Homodimer. The majority of CLEC5A is expressed as a monomeric form on macrophages. Interacts with TYROBP/DAP12. The interaction with TYROBP is required for CLEC5 cell surface expression. Interacts with HCST/DAP10. Forms a CLEC5A/TYROBP/HCST trimolecular complex depending almost solely on TYROBP. In terms of processing, N-glycosylated. Contains sialic acid residues. As to expression, strong expression in bone marrow cells and thioglycollate-induced neutrophils (at protein level). Expressed on granulocytes and monocytes from bone marrow and peripheral blood. Expressed in macrophage cell line J-774, but not in T-cell lines, B-cell lines, or mast cell lines.

The protein resides in the cell membrane. Functions as a positive regulator of osteoclastogenesis. Cell surface receptor that signals via TYROBP. Regulates inflammatory responses. This Mus musculus (Mouse) protein is C-type lectin domain family 5 member A (Clec5a).